Here is a 181-residue protein sequence, read N- to C-terminus: Protein Syd (181 aa).

Belongs to the Syd family.

It localises to the cell inner membrane. Functionally, interacts with the SecY protein in vivo. May bind preferentially to an uncomplexed state of SecY, thus functioning either as a chelating agent for excess SecY in the cell or as a regulatory factor that negatively controls the translocase function. This is Protein Syd from Shigella flexneri.